The chain runs to 504 residues: Amidophosphoribosyltransferase (504 aa).

Cysteine 2 functions as the Nucleophile in the catalytic mechanism. Residues 2 to 235 form the Glutamine amidotransferase type-2 domain; it reads CGIVGIVSQS…PGEAIYVTFE (234 aa). Positions 305, 367, and 368 each coordinate Mg(2+).

This sequence in the C-terminal section; belongs to the purine/pyrimidine phosphoribosyltransferase family. Mg(2+) serves as cofactor.

It catalyses the reaction 5-phospho-beta-D-ribosylamine + L-glutamate + diphosphate = 5-phospho-alpha-D-ribose 1-diphosphate + L-glutamine + H2O. It participates in purine metabolism; IMP biosynthesis via de novo pathway; N(1)-(5-phospho-D-ribosyl)glycinamide from 5-phospho-alpha-D-ribose 1-diphosphate: step 1/2. In terms of biological role, catalyzes the formation of phosphoribosylamine from phosphoribosylpyrophosphate (PRPP) and glutamine. This is Amidophosphoribosyltransferase from Pasteurella multocida (strain Pm70).